Consider the following 219-residue polypeptide: Large ribosomal subunit protein eL13 (219 aa).

Residues 198–219 are disordered; sequence KDAAENPDDVTKAPTAVKRNKT.

Belongs to the eukaryotic ribosomal protein eL13 family. In terms of assembly, component of the 60S large ribosomal subunit (LSU).

The protein localises to the cytoplasm. Its function is as follows. Component of the ribosome, a large ribonucleoprotein complex responsible for the synthesis of proteins in the cell. The small ribosomal subunit (SSU) binds messenger RNAs (mRNAs) and translates the encoded message by selecting cognate aminoacyl-transfer RNA (tRNA) molecules. The large subunit (LSU) contains the ribosomal catalytic site termed the peptidyl transferase center (PTC), which catalyzes the formation of peptide bonds, thereby polymerizing the amino acids delivered by tRNAs into a polypeptide chain. The nascent polypeptides leave the ribosome through a tunnel in the LSU and interact with protein factors that function in enzymatic processing, targeting, and the membrane insertion of nascent chains at the exit of the ribosomal tunnel. As part of the LSU, it is probably required for its formation and the maturation of rRNAs. This Spodoptera frugiperda (Fall armyworm) protein is Large ribosomal subunit protein eL13 (RpL13).